The sequence spans 109 residues: Prefoldin subunit 1 (109 aa).

Ser2 is subject to N-acetylserine.

It belongs to the prefoldin subunit beta family. As to quaternary structure, heterohexamer of two PFD-alpha type and four PFD-beta type subunits.

It localises to the cytoplasm. Functionally, binds specifically to cytosolic chaperonin (c-CPN) and transfers target proteins to it. Binds to nascent polypeptide chain and promotes folding in an environment in which there are many competing pathways for nonnative proteins. This Saccharomyces cerevisiae (strain ATCC 204508 / S288c) (Baker's yeast) protein is Prefoldin subunit 1 (PFD1).